We begin with the raw amino-acid sequence, 222 residues long: MEVVSLPRLGEPAPAFEAQTTFGPVKFPDDFKGQWVVLFSHPADFTPVCTTEFVAFAKNYEEFKKRNVQLIGLSVDSNFSHIAWVMNIKEKFGIEIPFPIIADHNMEVAKKYGMIHPAQSTTFTVRALFVIDDKGILRAMIYYPLTTGRNIREVIRLVDALQTADREGVATPADWVPEPQTWEFTEENTKVIVPPPTTYEDAVKRLQEGYECADWYICKKKV.

In terms of domain architecture, Thioredoxin spans 7-163 (PRLGEPAPAF…VIRLVDALQT (157 aa)). The Cysteine sulfenic acid (-SOH) intermediate role is filled by Cys-49. Arg-126 contributes to the substrate binding site. Cys-212 and Cys-218 are joined by a disulfide.

It belongs to the peroxiredoxin family. Prx6 subfamily. In terms of assembly, homodecamer. Pentamer of dimers that assemble into a ring structure.

The protein localises to the cytoplasm. The catalysed reaction is a hydroperoxide + [thioredoxin]-dithiol = an alcohol + [thioredoxin]-disulfide + H2O. Its function is as follows. Thiol-specific peroxidase that catalyzes the reduction of hydrogen peroxide and organic hydroperoxides to water and alcohols, respectively. Plays a role in cell protection against oxidative stress by detoxifying peroxides. This chain is Peroxiredoxin, found in Aquifex aeolicus (strain VF5).